The following is a 37-amino-acid chain: Cytochrome b6-f complex subunit 5 (37 aa).

A helical membrane pass occupies residues 5 to 25 (LLCGIVLGLIPVTLAGLFFAA).

This sequence belongs to the PetG family. In terms of assembly, the 4 large subunits of the cytochrome b6-f complex are cytochrome b6, subunit IV (17 kDa polypeptide, PetD), cytochrome f and the Rieske protein, while the 4 small subunits are PetG, PetL, PetM and PetN. The complex functions as a dimer.

It is found in the cellular thylakoid membrane. Functionally, component of the cytochrome b6-f complex, which mediates electron transfer between photosystem II (PSII) and photosystem I (PSI), cyclic electron flow around PSI, and state transitions. PetG is required for either the stability or assembly of the cytochrome b6-f complex. The polypeptide is Cytochrome b6-f complex subunit 5 (Thermosynechococcus vestitus (strain NIES-2133 / IAM M-273 / BP-1)).